Consider the following 275-residue polypeptide: tRNA (guanine-N(1)-)-methyltransferase (275 aa).

S-adenosyl-L-methionine is bound by residues glycine 139 and 159 to 164 (IGDYIL).

Belongs to the RNA methyltransferase TrmD family. Homodimer.

It localises to the cytoplasm. It catalyses the reaction guanosine(37) in tRNA + S-adenosyl-L-methionine = N(1)-methylguanosine(37) in tRNA + S-adenosyl-L-homocysteine + H(+). In terms of biological role, specifically methylates guanosine-37 in various tRNAs. In Lachnoclostridium phytofermentans (strain ATCC 700394 / DSM 18823 / ISDg) (Clostridium phytofermentans), this protein is tRNA (guanine-N(1)-)-methyltransferase.